Reading from the N-terminus, the 312-residue chain is Homoserine O-acetyltransferase (312 aa).

Cysteine 142 (acyl-thioester intermediate) is an active-site residue. Lysine 163 and serine 192 together coordinate substrate. Histidine 235 serves as the catalytic Proton acceptor. The active site involves glutamate 237. A substrate-binding site is contributed by arginine 249.

It belongs to the MetA family.

The protein resides in the cytoplasm. It carries out the reaction L-homoserine + acetyl-CoA = O-acetyl-L-homoserine + CoA. It functions in the pathway amino-acid biosynthesis; L-methionine biosynthesis via de novo pathway; O-acetyl-L-homoserine from L-homoserine: step 1/1. Transfers an acetyl group from acetyl-CoA to L-homoserine, forming acetyl-L-homoserine. This is Homoserine O-acetyltransferase from Ruegeria sp. (strain TM1040) (Silicibacter sp.).